The sequence spans 37 residues: Glucagon-1 (37 aa).

This sequence belongs to the glucagon family.

It is found in the secreted. Its function is as follows. Glucagon plays a key role in glucose metabolism and homeostasis. Regulates blood glucose by increasing gluconeogenesis and decreasing glycolysis. The polypeptide is Glucagon-1 (Huso dauricus (Kaluga sturgeon)).